A 92-amino-acid polypeptide reads, in one-letter code: Small ribosomal subunit protein uS19 (92 aa).

Belongs to the universal ribosomal protein uS19 family.

Its function is as follows. Protein S19 forms a complex with S13 that binds strongly to the 16S ribosomal RNA. The chain is Small ribosomal subunit protein uS19 from Vibrio vulnificus (strain CMCP6).